Consider the following 356-residue polypeptide: Inositol monophosphatase 3 (356 aa).

A helical transmembrane segment spans residues 11 to 31 (LGIGVFCLLGLGVLYHVYSGF). E127, D167, L169, D170, and D293 together coordinate Mg(2+). E127 serves as a coordination point for substrate. Residues 169–172 (LDAT) and D293 contribute to the substrate site.

Belongs to the inositol monophosphatase superfamily. Requires Mg(2+) as cofactor.

Its subcellular location is the membrane. It catalyses the reaction a myo-inositol phosphate + H2O = myo-inositol + phosphate. It functions in the pathway polyol metabolism; myo-inositol biosynthesis; myo-inositol from D-glucose 6-phosphate: step 2/2. This is Inositol monophosphatase 3 (bpnt2) from Xenopus tropicalis (Western clawed frog).